The chain runs to 490 residues: MSITSVSLYVYLICAGGHAKQVIDIFLDNGIEIKGIFDDNKTGQFYRGTQIIGVISDITKYQSEPFFCTVGDNQIREKISQTVGNVEWINCISKLAYISPSVVIGKGNYVGTHSKILADSQLGDFNIVNEGATLTHDNIIGDFNHIAPNVSVGGRVKIGNFNLIGTNSTVNPDILISNNIIIGSGATVVKSLVDPGIYIGTPCKKIIKNISDKCTCFPDNKPLYNEYTEDKSMENTENNKQKIPCFVLIYDQVDIIKKCLSFFTKYNSRLDIIVIENFSQNTNETIKPYVMNLLNKKKIWKYYLFENNIMNNAYHMALQHAIKTYLDPKKYPYTLITDGDLTIDNEDWIEEQINIMESNKNIYVSSCSLDTSNLPTETFPEATSWTKTGIDRGNYIEDNTGIFSLLLKTVDVIDLMVFLDSKNLRFLDSLINHYCYNYKYKIWARTKKSKAYHLTWDLYKDLDHPYTKMKRENIYLWSQNLTCKFDLFEN.

An N-terminal signal peptide occupies residues 1-19 (MSITSVSLYVYLICAGGHA).

It belongs to the mimivirus L137 family.

This is an uncharacterized protein from Acanthamoeba polyphaga (Amoeba).